The following is a 291-amino-acid chain: Acetylglutamate kinase (291 aa).

Substrate contacts are provided by residues 64-65, Arg86, and Asn190; that span reads GG.

It belongs to the acetylglutamate kinase family. ArgB subfamily.

Its subcellular location is the cytoplasm. It carries out the reaction N-acetyl-L-glutamate + ATP = N-acetyl-L-glutamyl 5-phosphate + ADP. It functions in the pathway amino-acid biosynthesis; L-arginine biosynthesis; N(2)-acetyl-L-ornithine from L-glutamate: step 2/4. In terms of biological role, catalyzes the ATP-dependent phosphorylation of N-acetyl-L-glutamate. The protein is Acetylglutamate kinase of Leptospira borgpetersenii serovar Hardjo-bovis (strain L550).